The chain runs to 874 residues: Alanine--tRNA ligase (874 aa).

The Zn(2+) site is built by His-562, His-566, Cys-665, and His-669.

This sequence belongs to the class-II aminoacyl-tRNA synthetase family. Zn(2+) serves as cofactor.

Its subcellular location is the cytoplasm. The catalysed reaction is tRNA(Ala) + L-alanine + ATP = L-alanyl-tRNA(Ala) + AMP + diphosphate. Its function is as follows. Catalyzes the attachment of alanine to tRNA(Ala) in a two-step reaction: alanine is first activated by ATP to form Ala-AMP and then transferred to the acceptor end of tRNA(Ala). Also edits incorrectly charged Ser-tRNA(Ala) and Gly-tRNA(Ala) via its editing domain. In Pseudomonas fluorescens (strain ATCC BAA-477 / NRRL B-23932 / Pf-5), this protein is Alanine--tRNA ligase.